The primary structure comprises 574 residues: Proline--tRNA ligase (574 aa).

Belongs to the class-II aminoacyl-tRNA synthetase family. ProS type 1 subfamily. As to quaternary structure, homodimer.

The protein localises to the cytoplasm. The enzyme catalyses tRNA(Pro) + L-proline + ATP = L-prolyl-tRNA(Pro) + AMP + diphosphate. In terms of biological role, catalyzes the attachment of proline to tRNA(Pro) in a two-step reaction: proline is first activated by ATP to form Pro-AMP and then transferred to the acceptor end of tRNA(Pro). As ProRS can inadvertently accommodate and process non-cognate amino acids such as alanine and cysteine, to avoid such errors it has two additional distinct editing activities against alanine. One activity is designated as 'pretransfer' editing and involves the tRNA(Pro)-independent hydrolysis of activated Ala-AMP. The other activity is designated 'posttransfer' editing and involves deacylation of mischarged Ala-tRNA(Pro). The misacylated Cys-tRNA(Pro) is not edited by ProRS. This chain is Proline--tRNA ligase, found in Nitrosococcus oceani (strain ATCC 19707 / BCRC 17464 / JCM 30415 / NCIMB 11848 / C-107).